Here is a 327-residue protein sequence, read N- to C-terminus: Arabinose 5-phosphate isomerase KpsF (327 aa).

Residues 48–191 (VLNLIMNCKG…AIAMIHQRKF (144 aa)) form the SIS domain. Residue 63 to 68 (GMGKSG) participates in ATP binding. Residues 82 to 83 (GT), H89, H95, 121 to 130 (KLVPSLKNFG), and 155 to 157 (HMA) contribute to the substrate site. Residue H89 participates in Zn(2+) binding. CBS domains follow at residues 217–273 (MQHD…EGSL) and 282–327 (MTRE…RIFD).

Homotetramer.

It carries out the reaction D-arabinose 5-phosphate = D-ribulose 5-phosphate. Its activity is regulated as follows. Inhibited by 10 uM zinc, cadmium or mercury ions. Involved in the biosynthesis of K-antigen capsules. Catalyzes the reversible aldol-ketol isomerization between D-ribulose 5-phosphate (Ru5P) and D-arabinose 5-phosphate (A5P). In Escherichia coli O6:H1 (strain CFT073 / ATCC 700928 / UPEC), this protein is Arabinose 5-phosphate isomerase KpsF.